The sequence spans 460 residues: Bifunctional protein GlmU (460 aa).

The pyrophosphorylase stretch occupies residues 1–232; sequence MALNVVILAA…AIEVEGANNR (232 aa). UDP-N-acetyl-alpha-D-glucosamine is bound by residues 8–11, Lys22, Gln73, 78–79, 100–102, Gly137, Glu157, Asn172, and Asn230; these read LAAG, GT, and YGD. Asp102 lines the Mg(2+) pocket. Asn230 serves as a coordination point for Mg(2+). Positions 233–253 are linker; sequence VQLAQLERAYQAREAEKLMLA. Residues 254-460 form an N-acetyltransferase region; it reads GANLRDPSRI…GWQRPVKIKK (207 aa). UDP-N-acetyl-alpha-D-glucosamine-binding residues include Arg336 and Lys354. His366 functions as the Proton acceptor in the catalytic mechanism. UDP-N-acetyl-alpha-D-glucosamine is bound by residues Tyr369 and Asn380. Acetyl-CoA is bound by residues Ala383, 389–390, Ser408, Ala426, and Arg443; that span reads NY.

In the N-terminal section; belongs to the N-acetylglucosamine-1-phosphate uridyltransferase family. The protein in the C-terminal section; belongs to the transferase hexapeptide repeat family. In terms of assembly, homotrimer. It depends on Mg(2+) as a cofactor.

It is found in the cytoplasm. The enzyme catalyses alpha-D-glucosamine 1-phosphate + acetyl-CoA = N-acetyl-alpha-D-glucosamine 1-phosphate + CoA + H(+). The catalysed reaction is N-acetyl-alpha-D-glucosamine 1-phosphate + UTP + H(+) = UDP-N-acetyl-alpha-D-glucosamine + diphosphate. It participates in nucleotide-sugar biosynthesis; UDP-N-acetyl-alpha-D-glucosamine biosynthesis; N-acetyl-alpha-D-glucosamine 1-phosphate from alpha-D-glucosamine 6-phosphate (route II): step 2/2. It functions in the pathway nucleotide-sugar biosynthesis; UDP-N-acetyl-alpha-D-glucosamine biosynthesis; UDP-N-acetyl-alpha-D-glucosamine from N-acetyl-alpha-D-glucosamine 1-phosphate: step 1/1. The protein operates within bacterial outer membrane biogenesis; LPS lipid A biosynthesis. Functionally, catalyzes the last two sequential reactions in the de novo biosynthetic pathway for UDP-N-acetylglucosamine (UDP-GlcNAc). The C-terminal domain catalyzes the transfer of acetyl group from acetyl coenzyme A to glucosamine-1-phosphate (GlcN-1-P) to produce N-acetylglucosamine-1-phosphate (GlcNAc-1-P), which is converted into UDP-GlcNAc by the transfer of uridine 5-monophosphate (from uridine 5-triphosphate), a reaction catalyzed by the N-terminal domain. This Shewanella baltica (strain OS223) protein is Bifunctional protein GlmU.